We begin with the raw amino-acid sequence, 613 residues long: Dihydroxy-acid dehydratase (613 aa).

Aspartate 81 contacts Mg(2+). Cysteine 122 contacts [2Fe-2S] cluster. The Mg(2+) site is built by aspartate 123 and lysine 124. Lysine 124 carries the post-translational modification N6-carboxylysine. Cysteine 193 is a [2Fe-2S] cluster binding site. Position 489 (glutamate 489) interacts with Mg(2+). Serine 515 functions as the Proton acceptor in the catalytic mechanism.

The protein belongs to the IlvD/Edd family. In terms of assembly, homodimer. The cofactor is [2Fe-2S] cluster. Mg(2+) is required as a cofactor.

The catalysed reaction is (2R)-2,3-dihydroxy-3-methylbutanoate = 3-methyl-2-oxobutanoate + H2O. It carries out the reaction (2R,3R)-2,3-dihydroxy-3-methylpentanoate = (S)-3-methyl-2-oxopentanoate + H2O. It participates in amino-acid biosynthesis; L-isoleucine biosynthesis; L-isoleucine from 2-oxobutanoate: step 3/4. The protein operates within amino-acid biosynthesis; L-valine biosynthesis; L-valine from pyruvate: step 3/4. Its function is as follows. Functions in the biosynthesis of branched-chain amino acids. Catalyzes the dehydration of (2R,3R)-2,3-dihydroxy-3-methylpentanoate (2,3-dihydroxy-3-methylvalerate) into 2-oxo-3-methylpentanoate (2-oxo-3-methylvalerate) and of (2R)-2,3-dihydroxy-3-methylbutanoate (2,3-dihydroxyisovalerate) into 2-oxo-3-methylbutanoate (2-oxoisovalerate), the penultimate precursor to L-isoleucine and L-valine, respectively. This Pseudomonas fluorescens (strain ATCC BAA-477 / NRRL B-23932 / Pf-5) protein is Dihydroxy-acid dehydratase.